A 155-amino-acid polypeptide reads, in one-letter code: Small ribosomal subunit protein uS7cz/uS7cy (155 aa).

The protein belongs to the universal ribosomal protein uS7 family. As to quaternary structure, part of the 30S ribosomal subunit.

Its subcellular location is the plastid. The protein resides in the chloroplast. One of the primary rRNA binding proteins, it binds directly to 16S rRNA where it nucleates assembly of the head domain of the 30S subunit. This is Small ribosomal subunit protein uS7cz/uS7cy (rps7-A) from Chloranthus spicatus (Chulantree).